The chain runs to 250 residues: Endonuclease NucS (250 aa).

The protein belongs to the NucS endonuclease family.

It localises to the cytoplasm. Its function is as follows. Cleaves both 3' and 5' ssDNA extremities of branched DNA structures. The sequence is that of Endonuclease NucS from Sulfolobus acidocaldarius (strain ATCC 33909 / DSM 639 / JCM 8929 / NBRC 15157 / NCIMB 11770).